The primary structure comprises 391 residues: Formate-dependent phosphoribosylglycinamide formyltransferase (391 aa).

N(1)-(5-phospho-beta-D-ribosyl)glycinamide contacts are provided by residues 20–21 and Glu-80; that span reads EL. ATP contacts are provided by residues Arg-112, Lys-153, 158–163, 193–196, and Glu-201; these read SSGKGQ and EGFI. The ATP-grasp domain occupies 117 to 306; that stretch reads RLAAEELDLS…EFALHVRAFT (190 aa). Mg(2+) contacts are provided by Glu-265 and Glu-277. N(1)-(5-phospho-beta-D-ribosyl)glycinamide is bound by residues Asp-284, Lys-354, and 361 to 362; that span reads RR.

It belongs to the PurK/PurT family. In terms of assembly, homodimer.

The enzyme catalyses N(1)-(5-phospho-beta-D-ribosyl)glycinamide + formate + ATP = N(2)-formyl-N(1)-(5-phospho-beta-D-ribosyl)glycinamide + ADP + phosphate + H(+). Its pathway is purine metabolism; IMP biosynthesis via de novo pathway; N(2)-formyl-N(1)-(5-phospho-D-ribosyl)glycinamide from N(1)-(5-phospho-D-ribosyl)glycinamide (formate route): step 1/1. Functionally, involved in the de novo purine biosynthesis. Catalyzes the transfer of formate to 5-phospho-ribosyl-glycinamide (GAR), producing 5-phospho-ribosyl-N-formylglycinamide (FGAR). Formate is provided by PurU via hydrolysis of 10-formyl-tetrahydrofolate. The chain is Formate-dependent phosphoribosylglycinamide formyltransferase from Vibrio parahaemolyticus serotype O3:K6 (strain RIMD 2210633).